Here is a 116-residue protein sequence, read N- to C-terminus: Large ribosomal subunit protein uL18 (116 aa).

Belongs to the universal ribosomal protein uL18 family. In terms of assembly, part of the 50S ribosomal subunit; part of the 5S rRNA/L5/L18/L25 subcomplex. Contacts the 5S and 23S rRNAs.

In terms of biological role, this is one of the proteins that bind and probably mediate the attachment of the 5S RNA into the large ribosomal subunit, where it forms part of the central protuberance. This chain is Large ribosomal subunit protein uL18, found in Azotobacter vinelandii (strain DJ / ATCC BAA-1303).